A 315-amino-acid polypeptide reads, in one-letter code: Vomeronasal type-1 receptor 54 (315 aa).

Residues 1-15 (MNKMNRLSHNTEIRN) lie on the Extracellular side of the membrane. The chain crosses the membrane as a helical span at residues 16-40 (AIYSGVGIGISGNSFLLLFHIFKYI). Topologically, residues 41–51 (RGQRSRHIDLP) are cytoplasmic. The chain crosses the membrane as a helical span at residues 52–71 (IGLLSLIHLVMLIAMSLVAT). Over 72–90 (DIFMPWGRWGDTTCKCVIS) the chain is Extracellular. A disulfide bond links Cys85 and Cys172. A helical transmembrane segment spans residues 91–112 (LYRFCRSLSLCATSLLSILQAV). At 113–132 (TLNPRNSCLEKFKRKSPHYM) the chain is on the cytoplasmic side. Residues 133–154 (LGCLLFLSVFYTFISSPLATYI) form a helical membrane-spanning segment. At 155 to 193 (TAKSNLTSPSFTYITTSCSLAPMSYSFHLTVFILLTSRD) the chain is on the extracellular side. Residues 194–212 (VIFVGLMLLSSGYMVTFLG) form a helical membrane-spanning segment. Residues 213–239 (RHKKQSQFLHITSFSLKPSAEKRAMRT) are Cytoplasmic-facing. Residues 240 to 260 (ILCLMSFFVLMYTLDSIVSYI) traverse the membrane as a helical segment. Topologically, residues 261–267 (RSIDDGQ) are extracellular. A helical transmembrane segment spans residues 268–288 (IFYCVHIFTAHGYATVSPFLI). The Cytoplasmic segment spans residues 289-315 (LSTEKYIINIFRSTFGRMVTIILLRNR).

It belongs to the G-protein coupled receptor 1 family.

The protein localises to the cell membrane. In terms of biological role, putative pheromone receptor implicated in the regulation of social and reproductive behavior. This Mus musculus (Mouse) protein is Vomeronasal type-1 receptor 54 (Vmn1r54).